Reading from the N-terminus, the 212-residue chain is Glycerol-3-phosphate acyltransferase (212 aa).

Helical transmembrane passes span 3–23 (LILLIIAAYLLGSIPTGLWIG), 69–89 (LLPMWLGVTHISPLLFGFFAI), 110–130 (AGILLGFAPFYLIFLLFIFFF), 143–163 (VIAASIAIITVLIFPALHFLL), and 165–185 (DYDFLFVLIVISAGSLIIIRH).

It belongs to the PlsY family. As to quaternary structure, probably interacts with PlsX.

The protein resides in the cell membrane. The enzyme catalyses an acyl phosphate + sn-glycerol 3-phosphate = a 1-acyl-sn-glycero-3-phosphate + phosphate. It participates in lipid metabolism; phospholipid metabolism. Functionally, catalyzes the transfer of an acyl group from acyl-phosphate (acyl-PO(4)) to glycerol-3-phosphate (G3P) to form lysophosphatidic acid (LPA). This enzyme utilizes acyl-phosphate as fatty acyl donor, but not acyl-CoA or acyl-ACP. The chain is Glycerol-3-phosphate acyltransferase from Streptococcus mutans serotype c (strain ATCC 700610 / UA159).